Reading from the N-terminus, the 378-residue chain is Spermidine/putrescine import ATP-binding protein PotA (378 aa).

The ABC transporter domain occupies 18-248; the sequence is VLLSGISKSF…PKNLFVAGFI (231 aa). 50–57 is an ATP binding site; that stretch reads GPSGCGKT.

It belongs to the ABC transporter superfamily. Spermidine/putrescine importer (TC 3.A.1.11.1) family. As to quaternary structure, the complex is composed of two ATP-binding proteins (PotA), two transmembrane proteins (PotB and PotC) and a solute-binding protein (PotD).

It localises to the cell inner membrane. It carries out the reaction ATP + H2O + polyamine-[polyamine-binding protein]Side 1 = ADP + phosphate + polyamineSide 2 + [polyamine-binding protein]Side 1.. Its function is as follows. Part of the ABC transporter complex PotABCD involved in spermidine/putrescine import. Responsible for energy coupling to the transport system. The chain is Spermidine/putrescine import ATP-binding protein PotA from Salmonella typhi.